Reading from the N-terminus, the 622-residue chain is Prolactin receptor (622 aa).

An N-terminal signal peptide occupies residues 1–24 (MKENVASATVFTLLLFLNTCLLNG). Topologically, residues 25–234 (QLPPGKPEIF…QIPSDFTMND (210 aa)) are extracellular. 2 Fibronectin type-III domains span residues 27 to 128 (PPGK…VQPD) and 129 to 229 (PPLE…IPSD). Cys36 and Cys46 are joined by a disulfide. Residue Asn59 is glycosylated (N-linked (GlcNAc...) asparagine). The cysteines at positions 75 and 86 are disulfide-linked. Residue Asn104 is glycosylated (N-linked (GlcNAc...) asparagine). Zn(2+) contacts are provided by Asp211 and His212. The WSXWS motif motif lies at 215–219 (WSAWS). N-linked (GlcNAc...) asparagine glycosylation occurs at Asn233. Residues 235–258 (TTVWISVAVLSAVICLIIVWAVAL) form a helical membrane-spanning segment. Residues 259–622 (KGYSMVTCIF…DPACFTHSFH (364 aa)) are Cytoplasmic-facing. Residues 267–275 (IFPPVPGPK) carry the Box 1 motif motif. Disordered stretches follow at residues 326–378 (MSVH…YDPE), 461–505 (SSQT…GSAK), and 520–545 (ALSLLPKQRENSGKPKKPGTPENNKE). Over residues 466–486 (KSREEGKATQQREVESFHSET) the composition is skewed to basic and acidic residues.

It belongs to the type I cytokine receptor family. Type 1 subfamily. Homodimer upon hormone binding. Interacts with SMARCA1. Interacts with GH1. Interacts with CSH. Interacts with NEK3 and VAV2 and this interaction is prolactin-dependent. As to expression, expressed in breast, placenta, kidney, liver and pancreas.

The protein localises to the membrane. It is found in the secreted. In terms of biological role, this is a receptor for the anterior pituitary hormone prolactin (PRL). Acts as a prosurvival factor for spermatozoa by inhibiting sperm capacitation through suppression of SRC kinase activation and stimulation of AKT. Isoform 4 is unable to transduce prolactin signaling. Isoform 6 is unable to transduce prolactin signaling. In Homo sapiens (Human), this protein is Prolactin receptor (PRLR).